The sequence spans 320 residues: o-succinylbenzoate synthase (320 aa).

K133 serves as the catalytic Proton donor. The Mg(2+) site is built by D161, E190, and D213. Catalysis depends on K235, which acts as the Proton acceptor.

This sequence belongs to the mandelate racemase/muconate lactonizing enzyme family. MenC type 1 subfamily. The cofactor is a divalent metal cation.

It carries out the reaction (1R,6R)-6-hydroxy-2-succinyl-cyclohexa-2,4-diene-1-carboxylate = 2-succinylbenzoate + H2O. The protein operates within quinol/quinone metabolism; 1,4-dihydroxy-2-naphthoate biosynthesis; 1,4-dihydroxy-2-naphthoate from chorismate: step 4/7. Its pathway is quinol/quinone metabolism; menaquinone biosynthesis. Functionally, converts 2-succinyl-6-hydroxy-2,4-cyclohexadiene-1-carboxylate (SHCHC) to 2-succinylbenzoate (OSB). The polypeptide is o-succinylbenzoate synthase (Escherichia fergusonii (strain ATCC 35469 / DSM 13698 / CCUG 18766 / IAM 14443 / JCM 21226 / LMG 7866 / NBRC 102419 / NCTC 12128 / CDC 0568-73)).